The primary structure comprises 849 residues: Autoinducer 1 sensor kinase/phosphatase LuxN (849 aa).

7 consecutive transmembrane segments (helical) span residues Ile-9–Phe-29, Val-41–Ile-61, Ser-160–Met-180, Ile-196–Phe-216, Phe-220–Leu-242, Tyr-251–Ile-275, and Trp-283–Tyr-301. The region spanning Ser-468 to Pro-683 is the Histidine kinase domain. Residue His-471 is modified to Phosphohistidine; by autocatalysis. One can recognise a Response regulatory domain in the interval Thr-722–Leu-835. At Asp-771 the chain carries 4-aspartylphosphate.

The protein localises to the cell inner membrane. The catalysed reaction is ATP + protein L-histidine = ADP + protein N-phospho-L-histidine.. Its activity is regulated as follows. The phosphatase activity is constitutive and the kinase activity is regulated by the presence or absence of AI-1. At low cell density the kinase activity overrides the phosphatase activity. At low cell density, in the absence of AI-1 (autoinducer 1), LuxN has a kinase activity and autophosphorylates on His-471. The phosphoryl group is then transferred on Asp-771 of the response regulator domain. The phosphoryl group is transferred to LuxU, and ultimately to LuxO. At high cell density, in the presence of AI-1, the kinase activity is inactivated, and the response regulator domain has a phosphatase activity. LuxN phosphatase acts on itself. As LuxU could function to establish an equilibrium between the aspartyl-phosphate of LuxN and the aspartyl-phosphate of LuxO, LuxU transfers phosphate from LuxO to LuxN and finally phosphate is drained from the system. This Vibrio campbellii (strain ATCC BAA-1116) protein is Autoinducer 1 sensor kinase/phosphatase LuxN (luxN).